The sequence spans 310 residues: Olfactory receptor 4D1 (310 aa).

At 1 to 25 the chain is on the extracellular side; it reads MEPQNTTQVSMFVLLGFSQTQELQK. An N-linked (GlcNAc...) asparagine glycan is attached at Asn-5. The helical transmembrane segment at 26–49 threads the bilayer; it reads FLFLLFLLVYVTTIVGNLLIMVTV. The Cytoplasmic segment spans residues 50–57; it reads TFDCRLHT. Residues 58 to 79 form a helical membrane-spanning segment; it reads PMYFLLRNLALIDLCYSTVTSP. At 80–100 the chain is on the extracellular side; that stretch reads KMLVDFLHETKTISYQGCMAQ. Cys-97 and Cys-189 are joined by a disulfide. The helical transmembrane segment at 101 to 120 threads the bilayer; it reads IFFFHLLGGGTVFFLSVMAY. The Cytoplasmic segment spans residues 121 to 139; the sequence is DRYIAISQPLRYVTIMNTQ. Residues 140–158 form a helical membrane-spanning segment; the sequence is LCVGLVVAAWVGGFVHSIV. Over 159–195 the chain is Extracellular; sequence QLALILPLPFCGPNILDNFYCDVPQVLRLACTDTSLL. The helical transmembrane segment at 196 to 219 threads the bilayer; sequence EFLMISNSGLLVIIWFLLLLISYT. The Cytoplasmic segment spans residues 220 to 235; the sequence is VILVMLRSHSGKARRK. Residues 236-258 traverse the membrane as a helical segment; the sequence is AASTCTTHIIVVSMIFIPCIYIY. Residues 259–269 are Extracellular-facing; that stretch reads TWPFTPFLMDK. A helical membrane pass occupies residues 270–289; that stretch reads AVSISYTVMTPMLNPMIYTL. Topologically, residues 290–310 are cytoplasmic; sequence RNQDMKAAMRRLGKCLVICRE.

Belongs to the G-protein coupled receptor 1 family.

It localises to the cell membrane. In terms of biological role, odorant receptor. The protein is Olfactory receptor 4D1 (OR4D1) of Homo sapiens (Human).